Reading from the N-terminus, the 463-residue chain is Chromosomal replication initiator protein DnaA (463 aa).

The tract at residues 1–83 (MSTNQIILTD…LQLFQHYNNT (83 aa)) is domain I, interacts with DnaA modulators. Residues 83–124 (TIKSIEIITKELPGTTQTVIELPTKTFADIGSSELNSENIFS) form a domain II region. The domain III, AAA+ region stretch occupies residues 125-343 (TLDVRFTFDN…GALNKVIAHS (219 aa)). ATP is bound by residues Gly171, Gly173, Lys174, and Thr175. Positions 344 to 463 (NFTLKEITLE…INLLMKILQN (120 aa)) are domain IV, binds dsDNA.

This sequence belongs to the DnaA family. As to quaternary structure, oligomerizes as a right-handed, spiral filament on DNA at oriC.

It localises to the cytoplasm. Plays an essential role in the initiation and regulation of chromosomal replication. ATP-DnaA binds to the origin of replication (oriC) to initiate formation of the DNA replication initiation complex once per cell cycle. Binds the DnaA box (a 9 base pair repeat at the origin) and separates the double-stranded (ds)DNA. Forms a right-handed helical filament on oriC DNA; dsDNA binds to the exterior of the filament while single-stranded (ss)DNA is stabiized in the filament's interior. The ATP-DnaA-oriC complex binds and stabilizes one strand of the AT-rich DNA unwinding element (DUE), permitting loading of DNA polymerase. After initiation quickly degrades to an ADP-DnaA complex that is not apt for DNA replication. Binds acidic phospholipids. In Rickettsia felis (strain ATCC VR-1525 / URRWXCal2) (Rickettsia azadi), this protein is Chromosomal replication initiator protein DnaA.